The chain runs to 502 residues: Alpha-ketoglutarate-dependent dioxygenase FTO (502 aa).

The tract at residues 32–324 (TPKDDEFYQQ…SSTHRVAECS (293 aa)) is fe2OG dioxygenase domain. Substrate-binding residues include R96 and Y108. N202 provides a ligand contact to 2-oxoglutarate. The interval 210–221 (PYLKEEPYFGMG) is loop L1; predicted to block binding of double-stranded DNA or RNA. K213 bears the N6-acetyllysine mark. Positions 228 and 230 each coordinate Fe cation. Residue 228 to 231 (HHDE) participates in substrate binding. Y292 contributes to the 2-oxoglutarate binding site. Fe cation is bound at residue H304. 2-oxoglutarate contacts are provided by residues 313–315 (RFS), T317, and R319.

It belongs to the fto family. Monomer. May also exist as homodimer. It depends on Fe(2+) as a cofactor. As to expression, ubiquitous. Detected in brain, brain cortex, hypothalamus, cerebellum, liver, pancreas, heart, kidney, white adipose tissue and skeletal muscle. Most abundant in the brain, particularly in hypothalamic nuclei governing energy balance.

Its subcellular location is the nucleus. The protein resides in the nucleus speckle. It localises to the cytoplasm. It catalyses the reaction a 5'-end (N(7)-methyl 5'-triphosphoguanosine)-(N(6),2'-O-dimethyladenosine) in mRNA + 2-oxoglutarate + O2 = a 5'-end (N(7)-methyl 5'-triphosphoguanosine)-(2'-O-methyladenosine) in mRNA + formaldehyde + succinate + CO2. It carries out the reaction an N(6)-methyladenosine in mRNA + 2-oxoglutarate + O2 = an adenosine in mRNA + formaldehyde + succinate + CO2. The catalysed reaction is N(6)-methyladenosine in U6 snRNA + 2-oxoglutarate + O2 = adenosine in U6 snRNA + formaldehyde + succinate + CO2. The enzyme catalyses a 5'-end (N(7)-methyl 5'-triphosphoguanosine)-(N(6),2'-O-dimethyladenosine) in U6 snRNA + 2-oxoglutarate + O2 = a 5'-end (N(7)-methyl 5'-triphosphoguanosine)-(2'-O-methyladenosine) in U6 snRNA + formaldehyde + succinate + CO2. It catalyses the reaction an N(1)-methyladenosine in tRNA + 2-oxoglutarate + O2 = an adenosine in tRNA + formaldehyde + succinate + CO2. Its activity is regulated as follows. Activated by ascorbate. Inhibited by N-oxalylglycine, fumarate and succinate. In terms of biological role, RNA demethylase that mediates oxidative demethylation of different RNA species, such as mRNAs, tRNAs and snRNAs, and acts as a regulator of fat mass, adipogenesis and energy homeostasis. Specifically demethylates N(6)-methyladenosine (m6A) RNA, the most prevalent internal modification of messenger RNA (mRNA) in higher eukaryotes. M6A demethylation by FTO affects mRNA expression and stability. Also able to demethylate m6A in U6 small nuclear RNA (snRNA). Mediates demethylation of N(6),2'-O-dimethyladenosine cap (m6A(m)), by demethylating the N(6)-methyladenosine at the second transcribed position of mRNAs and U6 snRNA. Demethylation of m6A(m) in the 5'-cap by FTO affects mRNA stability by promoting susceptibility to decapping. Also acts as a tRNA demethylase by removing N(1)-methyladenine from various tRNAs. Has no activity towards 1-methylguanine. Has no detectable activity towards double-stranded DNA. Also able to repair alkylated DNA and RNA by oxidative demethylation: demethylates single-stranded RNA containing 3-methyluracil, single-stranded DNA containing 3-methylthymine and has low demethylase activity towards single-stranded DNA containing 1-methyladenine or 3-methylcytosine. Ability to repair alkylated DNA and RNA is however unsure in vivo. Involved in the regulation of fat mass, adipogenesis and body weight, thereby contributing to the regulation of body size and body fat accumulation. Involved in the regulation of thermogenesis and the control of adipocyte differentiation into brown or white fat cells. Regulates activity of the dopaminergic midbrain circuitry via its ability to demethylate m6A in mRNAs. This is Alpha-ketoglutarate-dependent dioxygenase FTO from Mus musculus (Mouse).